A 158-amino-acid chain; its full sequence is Transcription elongation factor GreA (158 aa).

This sequence belongs to the GreA/GreB family.

Functionally, necessary for efficient RNA polymerase transcription elongation past template-encoded arresting sites. The arresting sites in DNA have the property of trapping a certain fraction of elongating RNA polymerases that pass through, resulting in locked ternary complexes. Cleavage of the nascent transcript by cleavage factors such as GreA or GreB allows the resumption of elongation from the new 3'terminus. GreA releases sequences of 2 to 3 nucleotides. The chain is Transcription elongation factor GreA from Baumannia cicadellinicola subsp. Homalodisca coagulata.